The following is a 4065-amino-acid chain: Polyketide synthase-nonribosomal peptide synthetase pyiS (4065 aa).

The 435-residue stretch at 6–440 (SEPVAIIGTG…GANCHAILEA (435 aa)) folds into the Ketosynthase family 3 (KS3) domain. Residues Cys179, His314, and His360 each act as for beta-ketoacyl synthase activity in the active site. Residues 552–875 (IFTGQGAQWP…PYTGVLSRGK (324 aa)) form an acyl transferase region. Residues 950 to 1087 (NELLGRQILD…CDVLVTYGDS (138 aa)) form an N-terminal hotdog fold region. The PKS/mFAS DH domain maps to 950–1260 (NELLGRQILD…TQPLFNPTEA (311 aa)). The tract at residues 951–1254 (ELLGRQILDG…QVEGLQTQPL (304 aa)) is dehydratase (DH) domain. Residue His982 is the Proton acceptor; for dehydratase activity of the active site. Residues 1102-1260 (EYFMLGVESD…TQPLFNPTEA (159 aa)) are C-terminal hotdog fold. Asp1166 functions as the Proton donor; for dehydratase activity in the catalytic mechanism. Residues 1409–1593 (AHGMPRYTKY…KQTGFSGIDT (185 aa)) form a methyltransferase (MT) domain region. The tract at residues 2129-2302 (TYWLVGLSGT…NASVVHIGAI (174 aa)) is ketoreductase (KR)domain. Positions 2411–2492 (INSAEVYEII…EILETAQQLL (82 aa)) constitute a Carrier 1 domain. Ser2452 bears the O-(pantetheine 4'-phosphoryl)serine mark. The disordered stretch occupies residues 2497–2561 (LPKMDPNDKS…GAKKGETVSK (65 aa)). Basic and acidic residues predominate over residues 2551 to 2561 (SGAKKGETVSK). Residues 2645–3076 (SKKTPISFAQ…FSRNQALRLA (432 aa)) form a condensation region. The segment at 3112–3516 (DIAKQKSHSL…RLLLEGRIAD (405 aa)) is adenylation. The Carrier 2 domain maps to 3634 to 3714 (QDLNDTESRL…DMAALVDELS (81 aa)). Ser3674 bears the O-(pantetheine 4'-phosphoryl)serine mark. Residues 3760 to 3975 (LTGSTGFLGR…LDFISVDEAA (216 aa)) form a reductase-like region.

Belongs to the NRP synthetase family.

It functions in the pathway mycotoxin biosynthesis. Its function is as follows. Hybrid PKS-NRPS synthetase; part of the gene cluster that mediates the biosynthesis of the mycotoxin pyrichalasin H, a tyrosine-derived cytochalasan that inhibits the growth of rice seedlings, but also inhibits lymphocyte capping and actin polymerization and alters cell morphology. Pyrichalasin H is indicated as the responsible agent for the genus-specific pathogenicity of M.grisea toward crabgrass. The first step in the pathway is catalyzed by the O-methyltransferase pyiA which methylates free tyrosine to generate the precursor O-methyltyrosine. The hybrid PKS-NRPS pyiS, assisted by the enoyl reductase pyiC, are responsible for fusion of the O-methyltyrosine precursor and the polyketide backbone. The polyketide synthase module (PKS) of pyiS is responsible for the synthesis of the polyketide backbone and the downstream nonribosomal peptide synthetase (NRPS) amidates the carboxyl end of the polyketide with the O-methyltyrosine precursor. As the NRPS A-domain demonstrates substrate tolerance, pyiS can also use phenylalanine, tyrosine and even para-chlorophenylalanine as amino acid precursor, which leads to the production of novel cytochalasans, including halogenated cytochalasans. Because pyiS lacks a designated enoylreductase (ER) domain, the required activity is provided the enoyl reductase pyiC. Reduction by the hydrolyase pyiE leads to 1,5-dihydropyrrolone, which is substrate for dehydration and intra-molecular Diels-Alder cyclization by the Diels-Alderase pyiF to yield the required isoindolone-fused macrocycle. The tailoring cytochrome P450 monooxygenases piyD and piyG catalyze the hydroxylation at C-18 and C-7, respectivily, whereas the short-chain dehydrogenase/reductase pyiH reduces the carbonyl at C-21 in preparation for the transfer of an acetyl group by the acetyltransferase pyiB. These 3 reactions whose order is not clear yet, lead to the production of O-methylpyrichalasin J, a deacetylated pyrichalasin H. Finally, pyiB to converts O-methylpyrichalasin J into the final product pyrichalasin H via acetylation of C-21. The protein is Polyketide synthase-nonribosomal peptide synthetase pyiS of Pyricularia grisea (Crabgrass-specific blast fungus).